Consider the following 163-residue polypeptide: NADH-quinone oxidoreductase subunit I (163 aa).

4Fe-4S ferredoxin-type domains follow at residues 53-83 (LRRYPNGEERCIACKLCEAVCPALAITIEAG) and 94-123 (TLYEIDMFKCIYCGFCEESCPVDSIVETRE). Cysteine 63, cysteine 66, cysteine 69, cysteine 73, cysteine 103, cysteine 106, cysteine 109, and cysteine 113 together coordinate [4Fe-4S] cluster.

Belongs to the complex I 23 kDa subunit family. As to quaternary structure, NDH-1 is composed of 14 different subunits. Subunits NuoA, H, J, K, L, M, N constitute the membrane sector of the complex. [4Fe-4S] cluster serves as cofactor.

The protein resides in the cell inner membrane. It carries out the reaction a quinone + NADH + 5 H(+)(in) = a quinol + NAD(+) + 4 H(+)(out). Functionally, NDH-1 shuttles electrons from NADH, via FMN and iron-sulfur (Fe-S) centers, to quinones in the respiratory chain. The immediate electron acceptor for the enzyme in this species is believed to be ubiquinone. Couples the redox reaction to proton translocation (for every two electrons transferred, four hydrogen ions are translocated across the cytoplasmic membrane), and thus conserves the redox energy in a proton gradient. The protein is NADH-quinone oxidoreductase subunit I of Alkalilimnicola ehrlichii (strain ATCC BAA-1101 / DSM 17681 / MLHE-1).